The primary structure comprises 305 residues: Phosphoribosylaminoimidazole-succinocarboxamide synthase (305 aa).

The protein belongs to the SAICAR synthetase family.

It carries out the reaction 5-amino-1-(5-phospho-D-ribosyl)imidazole-4-carboxylate + L-aspartate + ATP = (2S)-2-[5-amino-1-(5-phospho-beta-D-ribosyl)imidazole-4-carboxamido]succinate + ADP + phosphate + 2 H(+). It participates in purine metabolism; IMP biosynthesis via de novo pathway; 5-amino-1-(5-phospho-D-ribosyl)imidazole-4-carboxamide from 5-amino-1-(5-phospho-D-ribosyl)imidazole-4-carboxylate: step 1/2. The polypeptide is Phosphoribosylaminoimidazole-succinocarboxamide synthase (Albidiferax ferrireducens (strain ATCC BAA-621 / DSM 15236 / T118) (Rhodoferax ferrireducens)).